The sequence spans 206 residues: MSQFFYIHPDNPQQRLINQAVEIVRKGGVIVYPTDSGYALGCKIEDKNAMERICRIRQLPDGHNFTLMCRDLSELSTYSFVDNVAFRLMKNNTPGNYTFILKGTKEVPRRLLQEKRKTIGMRVPSNPIAQALLEALGEPMLSTSLMLPGSEFTESDPEEIKDRLEKQVDLIIHGGYLGQKPTTVIDLTDDTPVVVREGVGDVKPFL.

The YrdC-like domain occupies 14 to 200; the sequence is QRLINQAVEI…TPVVVREGVG (187 aa).

Belongs to the SUA5 family.

This is an uncharacterized protein from Escherichia coli O6:H1 (strain CFT073 / ATCC 700928 / UPEC).